The sequence spans 530 residues: Laccase-2 (530 aa).

An N-terminal signal peptide occupies residues 1–23; the sequence is MLLSSAFVGSCLAILNFAAAVSA. 2 consecutive Plastocyanin-like domains span residues 36–154 and 167–311; these read NKVI…YDPE and TTII…RYTN. Asparagine 82 carries an N-linked (GlcNAc...) asparagine glycan. 2 residues coordinate Cu cation: histidine 88 and histidine 90. Intrachain disulfides connect cysteine 109–cysteine 520 and cysteine 141–cysteine 228. Asparagine 120 carries an N-linked (GlcNAc...) asparagine glycan. 2 residues coordinate Cu cation: histidine 133 and histidine 135. Asparagine 191, asparagine 240, asparagine 292, asparagine 311, asparagine 366, asparagine 375, asparagine 392, and asparagine 412 each carry an N-linked (GlcNAc...) asparagine glycan. A Plastocyanin-like 3 domain is found at 379-504; the sequence is YVNPTVPVLL…FAVVLAEAPQ (126 aa). Cu cation is bound by residues histidine 428, histidine 431, histidine 433, histidine 484, cysteine 485, histidine 486, and histidine 490.

It belongs to the multicopper oxidase family. The cofactor is Cu cation.

It localises to the secreted. It catalyses the reaction 4 hydroquinone + O2 = 4 benzosemiquinone + 2 H2O. With respect to regulation, inhibited by chloride ions. Inhibited by citrate. Inhibited by oxalate. Activated by acetate. Its function is as follows. In vitro, has activity towards 2,2'-azino-bis(3-ethylbenzthiazoline-6-sulfonic acid) (ABTS), 2,6-dimethoxy-phenol, and guaiacol. Although brown rot fungi preferentially degrade hemicellulose and cellulose, the enzyme may contribute to generating small amounts of lignin breakdown products required for catalytic reactions. This is Laccase-2 from Fomitopsis schrenkii (Brown rot fungus).